The primary structure comprises 461 residues: Probable carboxypeptidase MGYG_04702 (461 aa).

Positions 1–20 are cleaved as a signal peptide; that stretch reads MQKTYLLALVSLLASSLVEA. 2 N-linked (GlcNAc...) asparagine glycosylation sites follow: N48 and N99. D176 is a Zn(2+) binding site. E208 functions as the Proton acceptor in the catalytic mechanism. E209 contributes to the Zn(2+) binding site. N-linked (GlcNAc...) asparagine glycosylation occurs at N396.

The protein belongs to the peptidase M20A family. The cofactor is Zn(2+).

The protein resides in the secreted. The sequence is that of Probable carboxypeptidase MGYG_04702 from Arthroderma gypseum (strain ATCC MYA-4604 / CBS 118893) (Microsporum gypseum).